A 78-amino-acid polypeptide reads, in one-letter code: Large ribosomal subunit protein bL28 (78 aa).

Residues 1-26 (MARVCQVTGKRPMSGHNVSHANNKTK) form a disordered region.

Belongs to the bacterial ribosomal protein bL28 family.

The chain is Large ribosomal subunit protein bL28 from Nitrosomonas europaea (strain ATCC 19718 / CIP 103999 / KCTC 2705 / NBRC 14298).